A 544-amino-acid polypeptide reads, in one-letter code: Protein angel homolog 2 (544 aa).

The protein belongs to the CCR4/nocturin family.

The polypeptide is Protein angel homolog 2 (Angel2) (Mus musculus (Mouse)).